We begin with the raw amino-acid sequence, 280 residues long: Probable inactive shikimate kinase like 1, chloroplastic (280 aa).

Residues M1–R54 constitute a chloroplast transit peptide.

The protein belongs to the shikimate kinase family.

Its subcellular location is the plastid. The protein localises to the chloroplast. In terms of biological role, required for chloroplast biogenesis. The sequence is that of Probable inactive shikimate kinase like 1, chloroplastic (SKL1) from Arabidopsis thaliana (Mouse-ear cress).